Here is a 142-residue protein sequence, read N- to C-terminus: Putative regulator of rDNA transcription protein 16 (142 aa).

3 consecutive transmembrane segments (helical) span residues 19 to 39 (ILLTVLFGIGWATLDLPVMVA), 84 to 104 (FLLFIGLNTSPCVSETIAIFL), and 111 to 131 (SIFIATEYLFLILLPLRGLCH).

The protein localises to the membrane. Identified in a screen for mutants with decreased levels of rDNA transcription. The sequence is that of Putative regulator of rDNA transcription protein 16 (RRT16) from Saccharomyces cerevisiae (strain ATCC 204508 / S288c) (Baker's yeast).